The following is a 430-amino-acid chain: Alpha-(1-&gt;3)-arabinofuranosyltransferase (430 aa).

The next 10 helical transmembrane spans lie at 26-46 (APST…LSVI), 114-134 (WYIS…LRIF), 136-156 (YTLS…TESV), 160-180 (LVFT…FRWL), 194-214 (AIGL…LPVL), 218-238 (FYTL…AWPL), 276-296 (WLIL…LWLL), 307-327 (FWLL…LSLG), 352-372 (WPAW…LGHW), and 381-401 (YMKI…VLYF).

It belongs to the glycosyltransferase 87 family.

The protein resides in the cell membrane. The enzyme catalyses Adds an alpha-D-arabinofuranosyl group from trans,octacis-decaprenylphospho-beta-D-arabinofuranose at the 3-O-position of an alpha-(1-&gt;5)-arabinofuranan chain attached to a beta-(1-&gt;5)-galactofuranan chain.. The protein operates within cell wall biogenesis; cell wall polysaccharide biosynthesis. Involved in the biosynthesis of the arabinogalactan (AG) region of the mycolylarabinogalactan-peptidoglycan (mAGP) complex, an essential component of the mycobacterial cell wall. Catalyzes the addition of an arabinofuranosyl (Araf) residue from the sugar donor beta-D-arabinofuranosyl-1-monophosphoryldecaprenol (DPA) on the C-3 of an alpha-(1-&gt;5)-linked Araf from the arabinan backbone of AG. This chain is Alpha-(1-&gt;3)-arabinofuranosyltransferase (aftC), found in Mycolicibacterium smegmatis (strain ATCC 700084 / mc(2)155) (Mycobacterium smegmatis).